The primary structure comprises 78 residues: Conotoxin TsMSGL-13 (78 aa).

Positions 1 to 24 (MSGLGIMVLTLLLFMFMATSHQDA) are cleaved as a signal peptide. The propeptide occupies 25-44 (GEKQATQRDAINVRRRRSIT). 3 disulfide bridges follow: cysteine 51-cysteine 63, cysteine 55-cysteine 72, and cysteine 62-cysteine 76. Residue phenylalanine 77 is modified to Phenylalanine amide.

The protein belongs to the conotoxin O3 superfamily. In terms of tissue distribution, expressed by the venom duct.

The protein localises to the secreted. This Conus tessulatus (Tessellate cone) protein is Conotoxin TsMSGL-13.